A 163-amino-acid polypeptide reads, in one-letter code: Nucleotide-binding protein SYNPCC7002_A1983 (163 aa).

Belongs to the YajQ family.

Functionally, nucleotide-binding protein. This is Nucleotide-binding protein SYNPCC7002_A1983 from Picosynechococcus sp. (strain ATCC 27264 / PCC 7002 / PR-6) (Agmenellum quadruplicatum).